Reading from the N-terminus, the 152-residue chain is UPF0266 membrane protein Ent638_2389 (152 aa).

Helical transmembrane passes span 6-26 (IVLV…EFIM), 45-65 (VDAF…VMSQ), and 67-87 (ALLT…LFWI).

This sequence belongs to the UPF0266 family.

Its subcellular location is the cell inner membrane. In Enterobacter sp. (strain 638), this protein is UPF0266 membrane protein Ent638_2389.